Consider the following 266-residue polypeptide: ATP synthase subunit a (266 aa).

5 helical membrane-spanning segments follow: residues 28 to 48 (SINV…LVIF), 88 to 108 (LIAP…LMDL), 141 to 161 (DVNI…FYSI), 206 to 226 (LFGN…LLPW), and 237 to 257 (AIFH…LTVV).

Belongs to the ATPase A chain family. As to quaternary structure, F-type ATPases have 2 components, CF(1) - the catalytic core - and CF(0) - the membrane proton channel. CF(1) has five subunits: alpha(3), beta(3), gamma(1), delta(1), epsilon(1). CF(0) has three main subunits: a(1), b(2) and c(9-12). The alpha and beta chains form an alternating ring which encloses part of the gamma chain. CF(1) is attached to CF(0) by a central stalk formed by the gamma and epsilon chains, while a peripheral stalk is formed by the delta and b chains.

Its subcellular location is the cell inner membrane. In terms of biological role, key component of the proton channel; it plays a direct role in the translocation of protons across the membrane. This Pectobacterium carotovorum subsp. carotovorum (strain PC1) protein is ATP synthase subunit a.